A 30-amino-acid polypeptide reads, in one-letter code: Photosystem I reaction center subunit XII (30 aa).

A helical membrane pass occupies residues 7–29 (VYTVLLIALLASVLAIRLGSTLY).

It belongs to the PsaM family.

Its subcellular location is the plastid. The protein resides in the chloroplast thylakoid membrane. This Trieres chinensis (Marine centric diatom) protein is Photosystem I reaction center subunit XII.